Reading from the N-terminus, the 334-residue chain is MLNTLVVGASGYTGAELAAYLHRHPHMNLIRLMVSAQSVDADKCFSDLHPQYKGIVDLPLQPLTDIINAAKGIDVVFLATAHEVSHDIAPLFLAAGCTVFDLSGAYRVQNAQIYQQYYGFKHKHTEWLAQAVYGLAEWQAENIKQAQLVAVPGCYPTVSQLCLKPLLENSLLDISYWPVINATSGVSGAGRKASMTNSFCEISLQPYGIFTHRHQPEIEEHLGTRVVFTPHLGNFARGILATITCKLKPGVTAEQIDEVYRQAYKDKPLVRLYSKGVPALKSVVGLPFCDIGFVVQGDHLIVVGTEDNLLKGAAAQAVQCMNIRFGFEETQALL.

Residue Cys154 is part of the active site.

This sequence belongs to the NAGSA dehydrogenase family. Type 1 subfamily.

The protein resides in the cytoplasm. The catalysed reaction is N-acetyl-L-glutamate 5-semialdehyde + phosphate + NADP(+) = N-acetyl-L-glutamyl 5-phosphate + NADPH + H(+). Its pathway is amino-acid biosynthesis; L-arginine biosynthesis; N(2)-acetyl-L-ornithine from L-glutamate: step 3/4. Its function is as follows. Catalyzes the NADPH-dependent reduction of N-acetyl-5-glutamyl phosphate to yield N-acetyl-L-glutamate 5-semialdehyde. This is N-acetyl-gamma-glutamyl-phosphate reductase from Photorhabdus laumondii subsp. laumondii (strain DSM 15139 / CIP 105565 / TT01) (Photorhabdus luminescens subsp. laumondii).